The sequence spans 223 residues: Urease accessory protein UreF (223 aa).

The protein belongs to the UreF family. UreD, UreF and UreG form a complex that acts as a GTP-hydrolysis-dependent molecular chaperone, activating the urease apoprotein by helping to assemble the nickel containing metallocenter of UreC. The UreE protein probably delivers the nickel.

The protein resides in the cytoplasm. Required for maturation of urease via the functional incorporation of the urease nickel metallocenter. This chain is Urease accessory protein UreF, found in Rhizobium meliloti (strain 1021) (Ensifer meliloti).